Here is a 383-residue protein sequence, read N- to C-terminus: Aquaporin-5 (383 aa).

Residues 1 to 46 lie on the Cytoplasmic side of the membrane; that stretch reads MSVTTLNGQPTLNISGPGQTALSRLDPLKKVFTKFFSSIPQKVRGH. A helical membrane pass occupies residues 47 to 67; the sequence is VVAVIGELIGTTAFLFIAFSA. At 68–93 the chain is on the extracellular side; sequence AEVALASANDNKGDKVSYETKSISTT. A helical transmembrane segment spans residues 94 to 114; the sequence is QILFIAFGAGISLVVNAWTFF. A topological domain (cytoplasmic) is located at residue Arg-115. The helical transmembrane segment at 116–136 threads the bilayer; it reads ISGGLFDPAVSIALFFVGAID. The short motif at 122 to 124 is the NPA 1 element; the sequence is DPA. Over 137-140 the chain is Extracellular; that stretch reads LTRC. Residues 141–161 form a helical membrane-spanning segment; it reads VLLCIAQCLGAIAASAMAYGL. At 162–180 the chain is on the cytoplasmic side; the sequence is YHGGLHTATTLKPGMSPAQ. The helical transmembrane segment at 181-201 threads the bilayer; that stretch reads GVIVEMILTCQLCFTVLMLAA. Topologically, residues 202 to 207 are extracellular; that stretch reads EKHEAT. A helical membrane pass occupies residues 208–228; it reads FLAPLGIGLSVFIGELAGVFW. At 229 to 252 the chain is on the cytoplasmic side; the sequence is TGGSMNPARSLGPAVVTLSFPSYH. The NPA 2 motif lies at 234-236; the sequence is NPA. Residues 253 to 273 form a helical membrane-spanning segment; the sequence is WIYWVGPIAGAGLASIIYKLI. Residues 274-383 are Extracellular-facing; the sequence is KALEYETAQL…DGFFGEMYAD (110 aa). A compositionally biased stretch (polar residues) spans 332–349; that stretch reads ARKSSSLVPTKSTKSGNS. The disordered stretch occupies residues 332-383; sequence ARKSSSLVPTKSTKSGNSEVKKTETVVEEPAKTQPKPAPAADDGFFGEMYAD. Residues 350–362 are compositionally biased toward basic and acidic residues; it reads EVKKTETVVEEPA. Over residues 363–372 the composition is skewed to low complexity; that stretch reads KTQPKPAPAA.

This sequence belongs to the MIP/aquaporin (TC 1.A.8) family.

It localises to the membrane. It carries out the reaction H2O(in) = H2O(out). Water channel required to facilitate the transport of water across membranes. May play a role in the vegetative growth. This Botryotinia fuckeliana (strain B05.10) (Noble rot fungus) protein is Aquaporin-5.